The sequence spans 370 residues: mRNA cap guanine-N(7) methyltransferase 1 (370 aa).

Residues 1–11 are compositionally biased toward low complexity; that stretch reads MKRGFSDSPSS. Positions 1-34 are disordered; that stretch reads MKRGFSDSPSSSAPPPSSRFKSNPEGDSQFLEDE. Residues 61–341 form the mRNA cap 0 methyltransferase domain; the sequence is SPIIHLKKLN…LYLSFVLRKR (281 aa). MRNA is bound at residue 70 to 71; sequence NN. Residues K74, A92, D114, 150–151, and 172–174 contribute to the S-adenosyl-L-methionine site; these read DC and QFA.

It belongs to the class I-like SAM-binding methyltransferase superfamily. mRNA cap 0 methyltransferase family.

It localises to the nucleus. The enzyme catalyses a 5'-end (5'-triphosphoguanosine)-ribonucleoside in mRNA + S-adenosyl-L-methionine = a 5'-end (N(7)-methyl 5'-triphosphoguanosine)-ribonucleoside in mRNA + S-adenosyl-L-homocysteine. MRNA-capping methyltransferase that methylates the N7 position of the added guanosine to the 5'-cap structure of mRNAs. Binds RNA containing 5'-terminal GpppC. This chain is mRNA cap guanine-N(7) methyltransferase 1, found in Arabidopsis thaliana (Mouse-ear cress).